A 313-amino-acid chain; its full sequence is Ribosomal RNA small subunit methyltransferase H (313 aa).

S-adenosyl-L-methionine-binding positions include 35 to 37 (GGH), Asp55, Phe79, Asp101, and Gln108.

Belongs to the methyltransferase superfamily. RsmH family.

It is found in the cytoplasm. The catalysed reaction is cytidine(1402) in 16S rRNA + S-adenosyl-L-methionine = N(4)-methylcytidine(1402) in 16S rRNA + S-adenosyl-L-homocysteine + H(+). Functionally, specifically methylates the N4 position of cytidine in position 1402 (C1402) of 16S rRNA. This is Ribosomal RNA small subunit methyltransferase H from Klebsiella pneumoniae (strain 342).